The primary structure comprises 638 residues: Glucans biosynthesis glucosyltransferase H (638 aa).

6 helical membrane-spanning segments follow: residues 60-82 (FYLIGGTMAMSLIATWVMLAVMW), 97-119 (FMFLFAWVTMSFASALAGFFCVV), 415-437 (IGHYFTAPMWGLLMLVGIAIPLV), 464-486 (LWIFTFTMFVLLAPKLLAYFALL), 499-521 (LRVLLSILLESILAALMAPVVMY), and 578-600 (LAMWMSPVVLGMAFSVPVVALTS).

This sequence belongs to the glycosyltransferase 2 family. OpgH subfamily.

It localises to the cell inner membrane. It functions in the pathway glycan metabolism; osmoregulated periplasmic glucan (OPG) biosynthesis. In terms of biological role, involved in the biosynthesis of osmoregulated periplasmic glucans (OPGs). The protein is Glucans biosynthesis glucosyltransferase H of Xylella fastidiosa (strain 9a5c).